Reading from the N-terminus, the 331-residue chain is tRNA U34 carboxymethyltransferase (331 aa).

Residues K91, W105, K110, G130, 152 to 154 (DPS), 181 to 182 (IE), M196, Y200, and R315 contribute to the carboxy-S-adenosyl-L-methionine site.

It belongs to the class I-like SAM-binding methyltransferase superfamily. CmoB family. As to quaternary structure, homotetramer.

It catalyses the reaction carboxy-S-adenosyl-L-methionine + 5-hydroxyuridine(34) in tRNA = 5-carboxymethoxyuridine(34) in tRNA + S-adenosyl-L-homocysteine + H(+). Catalyzes carboxymethyl transfer from carboxy-S-adenosyl-L-methionine (Cx-SAM) to 5-hydroxyuridine (ho5U) to form 5-carboxymethoxyuridine (cmo5U) at position 34 in tRNAs. In Shewanella baltica (strain OS185), this protein is tRNA U34 carboxymethyltransferase.